A 321-amino-acid polypeptide reads, in one-letter code: GTP 3',8-cyclase (321 aa).

The 229-residue stretch at 5 to 233 (SFNRVIDYIR…QGSSKIYTLE (229 aa)) folds into the Radical SAM core domain. Arg14 serves as a coordination point for GTP. [4Fe-4S] cluster-binding residues include Cys21 and Cys25. Tyr27 is an S-adenosyl-L-methionine binding site. Cys28 is a [4Fe-4S] cluster binding site. A GTP-binding site is contributed by Arg64. Residue Gly68 coordinates S-adenosyl-L-methionine. GTP is bound at residue Ser95. An S-adenosyl-L-methionine-binding site is contributed by Ser119. Residue Lys155 participates in GTP binding. Met189 contributes to the S-adenosyl-L-methionine binding site. [4Fe-4S] cluster-binding residues include Cys249 and Cys252. 254-256 (RIR) provides a ligand contact to GTP. A [4Fe-4S] cluster-binding site is contributed by Cys266.

It belongs to the radical SAM superfamily. MoaA family. Monomer and homodimer. [4Fe-4S] cluster is required as a cofactor.

It catalyses the reaction GTP + AH2 + S-adenosyl-L-methionine = (8S)-3',8-cyclo-7,8-dihydroguanosine 5'-triphosphate + 5'-deoxyadenosine + L-methionine + A + H(+). It participates in cofactor biosynthesis; molybdopterin biosynthesis. Functionally, catalyzes the cyclization of GTP to (8S)-3',8-cyclo-7,8-dihydroguanosine 5'-triphosphate. This chain is GTP 3',8-cyclase, found in Helicobacter pylori (strain J99 / ATCC 700824) (Campylobacter pylori J99).